Here is a 672-residue protein sequence, read N- to C-terminus: Flap endonuclease 1 (672 aa).

Residues 1 to 106 (MGIKGLTKFI…SELEKRGEKR (106 aa)) form an N-domain region. Aspartate 34 serves as a coordination point for Mg(2+). Arginine 47 and arginine 72 together coordinate DNA. Mg(2+) contacts are provided by aspartate 88, glutamate 160, glutamate 162, aspartate 181, and aspartate 183. Positions 124-266 (EIKKQSGRTV…KTAYNLIKEY (143 aa)) are I-domain. DNA is bound at residue glutamate 160. Residues glycine 244 and aspartate 246 each contribute to the DNA site. Residue aspartate 246 coordinates Mg(2+). The interval 349 to 357 (TQRRLDNFF) is interaction with PCNA. The segment at 371–610 (ETKKEQTLPA…EDSPNSYNNI (240 aa)) is disordered. 3 stretches are compositionally biased toward basic and acidic residues: residues 413–493 (MKEE…KKSL), 502–526 (DSDK…EKIN), and 535–548 (DHSR…KDNI). Residues 549–584 (SDINNNNNNNNSSSNNNNISNNHFNSVSSNSTFNSS) are compositionally biased toward low complexity. Residues 587-603 (LKSEDTLKSNSPLKEDS) show a composition bias toward basic and acidic residues.

Belongs to the XPG/RAD2 endonuclease family. FEN1 subfamily. In terms of assembly, interacts with PCNA1 and PCNA2. Three molecules of FEN1 bind to one PCNA trimer with each molecule binding to one PCNA monomer. PCNA stimulates the nuclease activity without altering cleavage specificity. Requires Mg(2+) as cofactor. Post-translationally, phosphorylated. Phosphorylation upon DNA damage induces relocalization to the nuclear plasma.

Its subcellular location is the nucleus. It is found in the nucleolus. The protein resides in the nucleoplasm. The protein localises to the mitochondrion. Functionally, structure-specific nuclease with 5'-flap endonuclease and 5'-3' exonuclease activities involved in DNA replication and repair. During DNA replication, cleaves the 5'-overhanging flap structure that is generated by displacement synthesis when DNA polymerase encounters the 5'-end of a downstream Okazaki fragment. It enters the flap from the 5'-end and then tracks to cleave the flap base, leaving a nick for ligation. Also involved in the long patch base excision repair (LP-BER) pathway, by cleaving within the apurinic/apyrimidinic (AP) site-terminated flap. Acts as a genome stabilization factor that prevents flaps from equilibrating into structures that lead to duplications and deletions. Also possesses 5'-3' exonuclease activity on nicked or gapped double-stranded DNA, and exhibits RNase H activity. Also involved in replication and repair of rDNA and in repairing mitochondrial DNA. The chain is Flap endonuclease 1 from Plasmodium falciparum (isolate 3D7).